Here is a 266-residue protein sequence, read N- to C-terminus: GTP-binding protein Rhes (266 aa).

Residue G26–S33 coordinates GTP. Positions Y48 to H56 match the Effector region motif. Residues D73–N77 and N140–D143 contribute to the GTP site. Residues M189–A235 form an interaction with GNB1, GNB2 and GNB3 region. Residue C263 is modified to Cysteine methyl ester. C263 carries S-farnesyl cysteine lipidation. Residues T264–Q266 constitute a propeptide, removed in mature form.

This sequence belongs to the small GTPase superfamily. RasD family. In terms of assembly, monomer (Potential). Interacts with PIK3CA and UBE2I. Interacts with GNB1, GNB2 and GNB3. Interacts with HTT; interacts with mutant HTT (mHTT) with a much higher affinity than wild type HTT. Farnesylated. Farnesylation is required for membrane targeting. In terms of tissue distribution, pancreatic endocrine cells (islets of Langerhans).

It localises to the cell membrane. GTPase signaling protein that binds to and hydrolyzes GTP. Regulates signaling pathways involving G-proteins-coupled receptor and heterotrimeric proteins such as GNB1, GNB2 and GNB3. May be involved in selected striatal competencies, mainly locomotor activity and motor coordination. This chain is GTP-binding protein Rhes (RASD2), found in Homo sapiens (Human).